The following is a 546-amino-acid chain: Chaperonin GroEL (546 aa).

Residues 29–32, Lys50, 86–90, Gly414, and Asp492 each bind ATP; these read TMGP and DGTTT.

Belongs to the chaperonin (HSP60) family. Forms a cylinder of 14 subunits composed of two heptameric rings stacked back-to-back. Interacts with the co-chaperonin GroES.

The protein localises to the cytoplasm. It carries out the reaction ATP + H2O + a folded polypeptide = ADP + phosphate + an unfolded polypeptide.. In terms of biological role, together with its co-chaperonin GroES, plays an essential role in assisting protein folding. The GroEL-GroES system forms a nano-cage that allows encapsulation of the non-native substrate proteins and provides a physical environment optimized to promote and accelerate protein folding. The protein is Chaperonin GroEL of Helicobacter pylori (strain P12).